Consider the following 486-residue polypeptide: Histone acetyltransferase type B catalytic subunit DDB_G0274269 (486 aa).

Residues 27–69 (DIEELKNKDNKENKDKENKAHIKDEGEEEEQKEKKEEEEKEDD) are a coiled coil. Basic and acidic residues predominate over residues 33–50 (NKDNKENKDKENKAHIKD). Positions 33-78 (NKDNKENKDKENKAHIKDEGEEEEQKEKKEEEEKEDDGGPISFHPT) are disordered. Residues 189–386 (VVFRYHEKLQ…YRISIKKRLY (198 aa)) form the N-acetyltransferase domain. Residues 260–262 (YLI) and 267–273 (QRMGHGK) contribute to the acetyl-CoA site. Residue E299 is the Proton donor/acceptor of the active site. Residues 392–481 (DSEQIEKIKQ…KNYHKTLSSL (90 aa)) are a coiled coil.

The protein belongs to the HAT1 family.

The catalysed reaction is L-lysyl-[protein] + acetyl-CoA = N(6)-acetyl-L-lysyl-[protein] + CoA + H(+). This is Histone acetyltransferase type B catalytic subunit DDB_G0274269 from Dictyostelium discoideum (Social amoeba).